Consider the following 272-residue polypeptide: MCPATVLDSILKGVRADVAAREACISLSEIKAAAAAAPAPLDAMAALREPGIGVIAEVKRASPSVGSLATIADPAKLAQAYEDGGARIISVLTEERRFNGSLDDLDAVRAAVSVPVLRKDFVVQPYQIHEARAHGADMLLLIVAALDQSALMSMLDRTESLGMIALVEVRTEQEADRALKAGAKVIGVNARDLMTLEVDRDCFSRIAPGLPSNVIRIAESGVRGPADLLAYAGAGADAVLVGEGLVKSGDPRAAVADLVTAGTHPSCPKPAR.

It belongs to the TrpC family.

It catalyses the reaction 1-(2-carboxyphenylamino)-1-deoxy-D-ribulose 5-phosphate + H(+) = (1S,2R)-1-C-(indol-3-yl)glycerol 3-phosphate + CO2 + H2O. Its pathway is amino-acid biosynthesis; L-tryptophan biosynthesis; L-tryptophan from chorismate: step 4/5. The polypeptide is Indole-3-glycerol phosphate synthase (Mycobacterium leprae (strain Br4923)).